The primary structure comprises 288 residues: MELLCCEVDPVRRAVPDANLLHDDRVLQNLLTIEERYLPQCSYFKCVQKDIQPYMRRMVATWMLEVCEEQKCEEEVFPLAINYLDRFLAGVPTPKTHLQLLGAVCMFLASKLKETIPLTAEKLCIYTDNSIKPQELLEWELVVLGKLKWNLAAVTPHDFIEHILRKLPQPNEKLSLIRKHAQTFIALCATDFKFAMYPPSMIATGSVGAAICGLQQDEDVSSLTGDALVDLLARITNTDVDCLKACQEQIEVVLLNSLQQYRQDQDGSKSEDELDQASTPTDVRDIDL.

The 126-residue stretch at 26–151 (VLQNLLTIEE…VVLGKLKWNL (126 aa)) folds into the Cyclin N-terminal domain. The segment at 264–288 (DQDGSKSEDELDQASTPTDVRDIDL) is disordered. Ser270 carries the post-translational modification Phosphoserine. A Phosphothreonine modification is found at Thr279.

This sequence belongs to the cyclin family. Cyclin D subfamily. As to quaternary structure, interacts with either CDK4 or CDK6 protein kinase to form a serine/threonine kinase holoenzyme complex. The cyclin subunit imparts substrate specificity to the complex. Post-translationally, phosphorylation at Thr-279 by MAP kinases is required for ubiquitination and degradation by the DCX(AMBRA1) complex. Ubiquitinated by the DCX(AMBRA1) complex during the transition from G1 to S cell phase, leading to its degradation: ubiquitination is dependent on Thr-279 phosphorylation. The DCX(AMBRA1) complex represents the major regulator of CCND2 stability during the G1/S transition. Polyubiquitinated by the SCF(FBXL2) complex, leading to proteasomal degradation.

It is found in the nucleus. The protein resides in the cytoplasm. Its subcellular location is the nucleus membrane. Regulatory component of the cyclin D2-CDK4 (DC) complex that phosphorylates and inhibits members of the retinoblastoma (RB) protein family including RB1 and regulates the cell-cycle during G(1)/S transition. Phosphorylation of RB1 allows dissociation of the transcription factor E2F from the RB/E2F complex and the subsequent transcription of E2F target genes which are responsible for the progression through the G(1) phase. Hypophosphorylates RB1 in early G(1) phase. Cyclin D-CDK4 complexes are major integrators of various mitogenenic and antimitogenic signals. This chain is G1/S-specific cyclin-D2 (CCND2), found in Sus scrofa (Pig).